The chain runs to 222 residues: Recombination protein RecR (222 aa).

The C4-type zinc-finger motif lies at 57–72 (CPVCFNITDAERCDVC). One can recognise a Toprim domain in the interval 80–173 (SVICVVEEPG…VVSRIAYGLP (94 aa)). Residues 189-222 (ALSGRRRVSEPASPPPPRRNDEEQDGAPARPPSH) form a disordered region.

The protein belongs to the RecR family.

Functionally, may play a role in DNA repair. It seems to be involved in an RecBC-independent recombinational process of DNA repair. It may act with RecF and RecO. This Deinococcus geothermalis (strain DSM 11300 / CIP 105573 / AG-3a) protein is Recombination protein RecR.